Consider the following 297-residue polypeptide: CASP-like protein 4A2 (297 aa).

Positions 1 to 136 (MKMKRTVSSN…MNGEESATTA (136 aa)) are disordered. At 1-149 (MKMKRTVSSN…ARRDDLVSVT (149 aa)) the chain is on the cytoplasmic side. Low complexity predominate over residues 8-19 (SSNSEAYSYNES). The span at 69–83 (LPSPIPPPPPQIPPP) shows a compositional bias: pro residues. A compositionally biased stretch (polar residues) spans 93–121 (MNSSLDKSPSSMVVQNSWVREDGQQNTTR). The chain crosses the membrane as a helical span at residues 150–170 (ALGFRITEVILCVISFSIMAA). Residues 171–189 (DKTQGWSGDSYDRYKEYRY) are Extracellular-facing. A helical membrane pass occupies residues 190 to 210 (CLAVNVIAFVYSAFEACDAAC). Topologically, residues 211–225 (YMAKESYMMNCGFHD) are cytoplasmic. Residues 226 to 246 (LFVFSMDQLLAYLLMSASSCA) traverse the membrane as a helical segment. The Extracellular portion of the chain corresponds to 247–265 (ATRVDDWVSNWGKDEFTQM). The chain crosses the membrane as a helical span at residues 266-286 (ATASIAVSFLAFGAFAVSALI). Residues 287–297 (SSYRLFTHASS) lie on the Cytoplasmic side of the membrane.

It belongs to the Casparian strip membrane proteins (CASP) family. Homodimer and heterodimers.

The protein resides in the cell membrane. This Arabidopsis lyrata subsp. lyrata (Lyre-leaved rock-cress) protein is CASP-like protein 4A2.